We begin with the raw amino-acid sequence, 163 residues long: ATP synthase subunit b (163 aa).

Residues serine 13–isoleucine 33 form a helical membrane-spanning segment.

The protein belongs to the ATPase B chain family. In terms of assembly, F-type ATPases have 2 components, F(1) - the catalytic core - and F(0) - the membrane proton channel. F(1) has five subunits: alpha(3), beta(3), gamma(1), delta(1), epsilon(1). F(0) has three main subunits: a(1), b(2) and c(10-14). The alpha and beta chains form an alternating ring which encloses part of the gamma chain. F(1) is attached to F(0) by a central stalk formed by the gamma and epsilon chains, while a peripheral stalk is formed by the delta and b chains.

It is found in the cell membrane. Functionally, f(1)F(0) ATP synthase produces ATP from ADP in the presence of a proton or sodium gradient. F-type ATPases consist of two structural domains, F(1) containing the extramembraneous catalytic core and F(0) containing the membrane proton channel, linked together by a central stalk and a peripheral stalk. During catalysis, ATP synthesis in the catalytic domain of F(1) is coupled via a rotary mechanism of the central stalk subunits to proton translocation. Component of the F(0) channel, it forms part of the peripheral stalk, linking F(1) to F(0). The polypeptide is ATP synthase subunit b (Buchnera aphidicola subsp. Schizaphis graminum (strain Sg)).